We begin with the raw amino-acid sequence, 415 residues long: MLESSSDKIKFAPIKEVDYKKPVSKSKNYTLINDIQPLEWYCHNDSETGYQHTISNKTDGGRGLFRVMKKSMETRVETQTLYFTDLHTGLCGFVQLLYSTVMGGIYKGFQLNFKVFGSESNNTDYDVWESFKLDDIAEFQPLKFVSRNVIFEFLSNKNEKLGSIGQLSIKCDLPTCNNTIQNLKIDLLVDLFQGFKMNPNGCNYYFDKQISMSDEFVSSDKMIRHVFVPRGKCNGNISYDKKLNSGDFQNKNISLTDVPVVYLDAVQGLLPNKAASKWNFLCFQSENYSVLAIEFTTPRDHDNVTVTVWSITEKNKLISIGSSVQSPKRHVRFRATSTDKESGWVYPTSIKFPGGFSEHDLRLVNRYDVLGELPSMVRSLAQKIVSIKPFIYQYCQPSKYKHEKGISIVESTFIS.

It belongs to the SVF1 family.

The protein resides in the cytoplasm. This is SVF1-like protein YDR222W from Saccharomyces cerevisiae (strain ATCC 204508 / S288c) (Baker's yeast).